Reading from the N-terminus, the 35-residue chain is Dermonecrotic toxin LdSicTox-alpha-1 (35 aa).

His11 is a catalytic residue. 2 residues coordinate Mg(2+): Glu31 and Asp33.

It belongs to the arthropod phospholipase D family. Class I subfamily. It depends on Mg(2+) as a cofactor. Post-translationally, contains 1 disulfide bond. As to expression, expressed by the venom gland.

Its subcellular location is the secreted. The enzyme catalyses an N-(acyl)-sphingosylphosphocholine = an N-(acyl)-sphingosyl-1,3-cyclic phosphate + choline. The catalysed reaction is an N-(acyl)-sphingosylphosphoethanolamine = an N-(acyl)-sphingosyl-1,3-cyclic phosphate + ethanolamine. It carries out the reaction a 1-acyl-sn-glycero-3-phosphocholine = a 1-acyl-sn-glycero-2,3-cyclic phosphate + choline. It catalyses the reaction a 1-acyl-sn-glycero-3-phosphoethanolamine = a 1-acyl-sn-glycero-2,3-cyclic phosphate + ethanolamine. Functionally, dermonecrotic toxins cleave the phosphodiester linkage between the phosphate and headgroup of certain phospholipids (sphingolipid and lysolipid substrates), forming an alcohol (often choline) and a cyclic phosphate. This toxin acts on sphingomyelin (SM). It may also act on ceramide phosphoethanolamine (CPE), lysophosphatidylcholine (LPC) and lysophosphatidylethanolamine (LPE), but not on lysophosphatidylserine (LPS), and lysophosphatidylglycerol (LPG). It acts by transphosphatidylation, releasing exclusively cyclic phosphate products as second products. Induces dermonecrosis, hemolysis, increased vascular permeability, edema, inflammatory response, and platelet aggregation. This Loxosceles deserta (Desert recluse spider) protein is Dermonecrotic toxin LdSicTox-alpha-1.